The following is a 339-amino-acid chain: Fructose-1,6-bisphosphatase isozyme 2 (339 aa).

The important for interaction with ALDOA stretch occupies residues aspartate 3–aspartate 10. AMP is bound by residues valine 18 and threonine 28 to threonine 32. Mg(2+) is bound by residues aspartate 69 and glutamate 98. Residue lysine 113 to tyrosine 114 coordinates AMP. Aspartate 119, leucine 121, and aspartate 122 together coordinate Mg(2+). Aspartate 122 contacts substrate. Residue arginine 141 coordinates AMP. The Nuclear localization signal signature appears at lysine 204 to lysine 208. Asparagine 213–tyrosine 216 serves as a coordination point for substrate. Phosphotyrosine occurs at positions 216 and 219. Substrate-binding positions include tyrosine 245–methionine 249, tyrosine 265, and lysine 275. Glutamate 281 contacts Mg(2+).

It belongs to the FBPase class 1 family. Homotetramer. Interacts with ALDOA; the interaction blocks inhibition by physiological concentrations of AMP and reduces inhibition by Ca(2+). Interacts with alpha-actinin and F-actin. Requires Mg(2+) as cofactor.

It is found in the cell junction. The protein localises to the cytoplasm. It localises to the nucleus. The protein resides in the myofibril. Its subcellular location is the sarcomere. It is found in the z line. It carries out the reaction beta-D-fructose 1,6-bisphosphate + H2O = beta-D-fructose 6-phosphate + phosphate. Its pathway is carbohydrate biosynthesis; gluconeogenesis. With respect to regulation, subject to complex allosteric regulation. The enzyme can assume an active R-state, or an inactive T-state. Intermediate conformations may exist. AMP acts as an allosteric inhibitor. Fructose 2,6-bisphosphate acts as a competitive inhibitor. Strongly inhibited by Ca(2+). Catalyzes the hydrolysis of fructose 1,6-bisphosphate to fructose 6-phosphate in the presence of divalent cations and probably participates in glycogen synthesis from carbohydrate precursors, such as lactate. This chain is Fructose-1,6-bisphosphatase isozyme 2 (FBP2), found in Oryctolagus cuniculus (Rabbit).